Consider the following 253-residue polypeptide: Ubiquinone/menaquinone biosynthesis C-methyltransferase UbiE (253 aa).

S-adenosyl-L-methionine is bound by residues threonine 76, aspartate 97, 125–126 (NA), and serine 142.

The protein belongs to the class I-like SAM-binding methyltransferase superfamily. MenG/UbiE family.

It catalyses the reaction a 2-demethylmenaquinol + S-adenosyl-L-methionine = a menaquinol + S-adenosyl-L-homocysteine + H(+). It carries out the reaction a 2-methoxy-6-(all-trans-polyprenyl)benzene-1,4-diol + S-adenosyl-L-methionine = a 5-methoxy-2-methyl-3-(all-trans-polyprenyl)benzene-1,4-diol + S-adenosyl-L-homocysteine + H(+). The protein operates within quinol/quinone metabolism; menaquinone biosynthesis; menaquinol from 1,4-dihydroxy-2-naphthoate: step 2/2. It participates in cofactor biosynthesis; ubiquinone biosynthesis. In terms of biological role, methyltransferase required for the conversion of demethylmenaquinol (DMKH2) to menaquinol (MKH2) and the conversion of 2-polyprenyl-6-methoxy-1,4-benzoquinol (DDMQH2) to 2-polyprenyl-3-methyl-6-methoxy-1,4-benzoquinol (DMQH2). This Xylella fastidiosa (strain 9a5c) protein is Ubiquinone/menaquinone biosynthesis C-methyltransferase UbiE.